A 199-amino-acid chain; its full sequence is NAD(P)H dehydrogenase (quinone) (199 aa).

The Flavodoxin-like domain maps to M4–V190. FMN-binding positions include S10–M15 and T78–Y80. NAD(+) is bound at residue Y12. Residue W98 participates in substrate binding. FMN-binding positions include S113–G119 and H134. Residues G158–D181 are disordered. A compositionally biased stretch (polar residues) spans M163–A177.

It belongs to the WrbA family. It depends on FMN as a cofactor.

The catalysed reaction is a quinone + NADH + H(+) = a quinol + NAD(+). The enzyme catalyses a quinone + NADPH + H(+) = a quinol + NADP(+). This Brucella ovis (strain ATCC 25840 / 63/290 / NCTC 10512) protein is NAD(P)H dehydrogenase (quinone).